Consider the following 89-residue polypeptide: Probable Fe(2+)-trafficking protein (89 aa).

Belongs to the Fe(2+)-trafficking protein family.

In terms of biological role, could be a mediator in iron transactions between iron acquisition and iron-requiring processes, such as synthesis and/or repair of Fe-S clusters in biosynthetic enzymes. The sequence is that of Probable Fe(2+)-trafficking protein from Stenotrophomonas maltophilia (strain K279a).